The following is a 246-amino-acid chain: 3'(2'),5'-bisphosphate nucleotidase CysQ (246 aa).

Positions 64, 83, 85, 86, and 205 each coordinate Mg(2+). Glu-64 contacts substrate. Substrate contacts are provided by residues 85-88 (LDGT) and Asp-205.

It belongs to the inositol monophosphatase superfamily. CysQ family. Mg(2+) serves as cofactor.

It localises to the cell inner membrane. It catalyses the reaction adenosine 3',5'-bisphosphate + H2O = AMP + phosphate. Converts adenosine-3',5'-bisphosphate (PAP) to AMP. The chain is 3'(2'),5'-bisphosphate nucleotidase CysQ from Shigella flexneri.